Here is a 98-residue protein sequence, read N- to C-terminus: NADH-ubiquinone oxidoreductase chain 4L (98 aa).

A run of 3 helical transmembrane segments spans residues 1 to 21 (MSMV…GLLM), 29 to 49 (SLLC…VTIL), and 61 to 81 (IILL…LVMV).

This sequence belongs to the complex I subunit 4L family. In terms of assembly, core subunit of respiratory chain NADH dehydrogenase (Complex I) which is composed of 45 different subunits.

Its subcellular location is the mitochondrion inner membrane. It catalyses the reaction a ubiquinone + NADH + 5 H(+)(in) = a ubiquinol + NAD(+) + 4 H(+)(out). In terms of biological role, core subunit of the mitochondrial membrane respiratory chain NADH dehydrogenase (Complex I) which catalyzes electron transfer from NADH through the respiratory chain, using ubiquinone as an electron acceptor. Part of the enzyme membrane arm which is embedded in the lipid bilayer and involved in proton translocation. The polypeptide is NADH-ubiquinone oxidoreductase chain 4L (MT-ND4L) (Eumetopias jubatus (Steller sea lion)).